The sequence spans 402 residues: Protein FixF (402 aa).

The polypeptide is Protein FixF (fixF) (Sinorhizobium fredii (strain NBRC 101917 / NGR234)).